A 452-amino-acid polypeptide reads, in one-letter code: Probable alpha-galactosidase B (452 aa).

A signal peptide spans 1 to 24 (MLHRATTTAAAAAAAALLLCPVQA). Cysteines 47 and 79 form a disulfide. Residues N87 and N138 are each glycosylated (N-linked (GlcNAc...) asparagine). C129 and C159 form a disulfide bridge. D157 acts as the Nucleophile in catalysis. The N-linked (GlcNAc...) asparagine glycan is linked to N184. Position 231-235 (231-235 (DWGQA)) interacts with substrate. The Proton donor role is filled by D253. Residues N292, N391, N409, and N410 are each glycosylated (N-linked (GlcNAc...) asparagine).

The protein belongs to the glycosyl hydrolase 27 family.

Its subcellular location is the secreted. It catalyses the reaction Hydrolysis of terminal, non-reducing alpha-D-galactose residues in alpha-D-galactosides, including galactose oligosaccharides, galactomannans and galactolipids.. Functionally, hydrolyzes a variety of simple alpha-D-galactoside as well as more complex molecules such as oligosaccharides and polysaccharides. This chain is Probable alpha-galactosidase B, found in Talaromyces emersonii (Thermophilic fungus).